The chain runs to 239 residues: tRNA (guanine-N(1)-)-methyltransferase (239 aa).

S-adenosyl-L-methionine-binding positions include G108 and V128 to V133.

The protein belongs to the RNA methyltransferase TrmD family. In terms of assembly, homodimer.

It localises to the cytoplasm. It carries out the reaction guanosine(37) in tRNA + S-adenosyl-L-methionine = N(1)-methylguanosine(37) in tRNA + S-adenosyl-L-homocysteine + H(+). Specifically methylates guanosine-37 in various tRNAs. This Helicobacter hepaticus (strain ATCC 51449 / 3B1) protein is tRNA (guanine-N(1)-)-methyltransferase.